Reading from the N-terminus, the 91-residue chain is Large ribosomal subunit protein bL27 (91 aa).

Positions 1–22 (MAHKKAGGSSRNGRDSDGRRLG) are disordered.

It belongs to the bacterial ribosomal protein bL27 family.

The sequence is that of Large ribosomal subunit protein bL27 from Beijerinckia indica subsp. indica (strain ATCC 9039 / DSM 1715 / NCIMB 8712).